Reading from the N-terminus, the 180-residue chain is MVPRLKEKYEKEVIPALMEKFQYKNIMEVPKLEKIVINMGVGEAKENQKVLESAVADMQLISGQKPILTRAKKSVANFKIRENMPIGCKVTLRKNKMFEFADKLMNVALPRVRDFRGVSSKSFDGRGNYALGIKEQLIFPEVEYDKIDKVRGMDVIFVTNAKTDEEARELLRFLGMPFAQ.

This sequence belongs to the universal ribosomal protein uL5 family. As to quaternary structure, part of the 50S ribosomal subunit; part of the 5S rRNA/L5/L18/L25 subcomplex. Contacts the 5S rRNA and the P site tRNA. Forms a bridge to the 30S subunit in the 70S ribosome.

This is one of the proteins that bind and probably mediate the attachment of the 5S RNA into the large ribosomal subunit, where it forms part of the central protuberance. In the 70S ribosome it contacts protein S13 of the 30S subunit (bridge B1b), connecting the 2 subunits; this bridge is implicated in subunit movement. Contacts the P site tRNA; the 5S rRNA and some of its associated proteins might help stabilize positioning of ribosome-bound tRNAs. In Clostridium acetobutylicum (strain ATCC 824 / DSM 792 / JCM 1419 / IAM 19013 / LMG 5710 / NBRC 13948 / NRRL B-527 / VKM B-1787 / 2291 / W), this protein is Large ribosomal subunit protein uL5.